A 589-amino-acid polypeptide reads, in one-letter code: Serine/threonine-protein kinase PknJ (589 aa).

At 1–342 (MAHELSAGSV…LPRRPRRYRR (342 aa)) the chain is on the cytoplasmic side. The Protein kinase domain maps to 14 to 276 (YRIERMLGAG…SAGEFAHAAA (263 aa)). ATP is bound by residues 20-28 (LGAGGMGTV) and K43. The active-site Proton acceptor is D136. The helical transmembrane segment at 343–363 (GVAAVAAVMVVAAAAVTAVTM) threads the bilayer. Residues 364 to 589 (TSHQPRTATP…TNYILAKIPG (226 aa)) lie on the Extracellular side of the membrane. The span at 365–387 (SHQPRTATPPSAAALSPTSSSTT) shows a compositional bias: low complexity. The segment at 365–400 (SHQPRTATPPSAAALSPTSSSTTPPQPPIVTRSRLP) is disordered.

This sequence belongs to the protein kinase superfamily. Ser/Thr protein kinase family. In terms of assembly, homodimer.

It localises to the cell membrane. The catalysed reaction is L-seryl-[protein] + ATP = O-phospho-L-seryl-[protein] + ADP + H(+). It carries out the reaction L-threonyl-[protein] + ATP = O-phospho-L-threonyl-[protein] + ADP + H(+). The chain is Serine/threonine-protein kinase PknJ (pknJ) from Mycobacterium bovis (strain ATCC BAA-935 / AF2122/97).